Consider the following 294-residue polypeptide: Urease accessory protein UreD (294 aa).

Residues 1–22 are disordered; it reads MSVEKPVAAGRQNSKATGRHKG.

The protein belongs to the UreD family. UreD, UreF and UreG form a complex that acts as a GTP-hydrolysis-dependent molecular chaperone, activating the urease apoprotein by helping to assemble the nickel containing metallocenter of UreC. The UreE protein probably delivers the nickel.

It localises to the cytoplasm. Functionally, required for maturation of urease via the functional incorporation of the urease nickel metallocenter. The protein is Urease accessory protein UreD of Alcanivorax borkumensis (strain ATCC 700651 / DSM 11573 / NCIMB 13689 / SK2).